Here is a 482-residue protein sequence, read N- to C-terminus: Transcription termination/antitermination protein NusA (482 aa).

Residues 133–197 form the S1 motif domain; it reads NKVVIGYVQQ…NGIEVILSRT (65 aa). The region spanning 300–446 is the KH domain; the sequence is LHKALVVVSD…NDNDESMEKV (147 aa).

Belongs to the NusA family. Monomer. Binds directly to the core enzyme of the DNA-dependent RNA polymerase and to nascent RNA.

The protein localises to the cytoplasm. Participates in both transcription termination and antitermination. This Borreliella burgdorferi (strain ATCC 35210 / DSM 4680 / CIP 102532 / B31) (Borrelia burgdorferi) protein is Transcription termination/antitermination protein NusA.